We begin with the raw amino-acid sequence, 135 residues long: MFEEVEVEAYVYPTEDIEKVKRAMLNLIPDLEFEAFDRGDYIILTGKTRSKKALQRLYELFRGQAILDTARSFLEEGYFGEEIIIKVNKQAAYAGVVNFNEESPLGPITIIIRTKDPQRLMKWLAPRTKDGVPIE.

Belongs to the UPF0201 family.

In Thermococcus onnurineus (strain NA1), this protein is UPF0201 protein TON_1346.